The chain runs to 85 residues: Large ribosomal subunit protein uL29 (85 aa).

It belongs to the universal ribosomal protein uL29 family.

The sequence is that of Large ribosomal subunit protein uL29 from Thermobifida fusca (strain YX).